The primary structure comprises 309 residues: MELQFLGTGAGQPAKQRNVSSLALKLLDEINEVWMFDCGEGTQRQILETTIKPRKIRKIFITHLHGDHIFGLPGFLSSRSFQASEEQTDLDIYGPIGIKTYVLTSLKVSGARVPYQIHFHEFDDKSLGKIMETDKFEVYAERLAHTIFCMGYRVVQKDLEGTLDAEALKAAGVPFGPLFGKIKNGQDVELEDGRLICAKDYISAPKKGKIITIIGDTRKTSASVKLAKDADVLVHESTYGKGDERIARNHGHSTNMQAAQIAHEAGAKRLLLNHVSARFLGRDCRQMEKDAATIFENVKMVQDLEEVII.

7 residues coordinate Zn(2+): His-63, His-65, Asp-67, His-68, His-145, Asp-216, and His-274. Residue Asp-67 is the Proton acceptor of the active site.

The protein belongs to the RNase Z family. In terms of assembly, homodimer. Requires Zn(2+) as cofactor.

The catalysed reaction is Endonucleolytic cleavage of RNA, removing extra 3' nucleotides from tRNA precursor, generating 3' termini of tRNAs. A 3'-hydroxy group is left at the tRNA terminus and a 5'-phosphoryl group is left at the trailer molecule.. Zinc phosphodiesterase, which displays some tRNA 3'-processing endonuclease activity. Probably involved in tRNA maturation, by removing a 3'-trailer from precursor tRNA. This chain is Ribonuclease Z, found in Streptococcus pyogenes serotype M1.